Reading from the N-terminus, the 357-residue chain is Arginine kinase Cal b 2.0101 (357 aa).

One can recognise a Phosphagen kinase N-terminal domain in the interval Lys-9–Lys-91. Residue Gly-64–Tyr-68 participates in L-arginine binding. The Phosphagen kinase C-terminal domain maps to Phe-119 to Met-356. ATP-binding positions include Ser-122–Arg-126 and His-185. Cys-201 and Cys-271 are disulfide-bonded. Glu-225 contributes to the L-arginine binding site. Arg-229 is an ATP binding site. Cys-271 lines the L-arginine pocket. Residues Arg-280–His-284 and Arg-309–Glu-314 each bind ATP. Glu-314 provides a ligand contact to L-arginine.

It belongs to the ATP:guanido phosphotransferase family. In terms of tissue distribution, expressed in chela muscle (at protein level). Expressed in muscle.

The enzyme catalyses L-arginine + ATP = N(omega)-phospho-L-arginine + ADP + H(+). Catalyzes the reversible transfer of high energy ATP gamma-phosphate group to L-arginine. This chain is Arginine kinase Cal b 2.0101, found in Callinectes bellicosus (Warrior swimming crab).